A 284-amino-acid chain; its full sequence is Acetyl-coenzyme A carboxylase carboxyl transferase subunit beta (284 aa).

In terms of domain architecture, CoA carboxyltransferase N-terminal spans 25-284 (LWTKCPKCES…ICRMLLQKSA (260 aa)). Cys-29, Cys-32, Cys-48, and Cys-51 together coordinate Zn(2+). Residues 29-51 (CPKCESTLYRAEVRRNLEVCPKC) form a C4-type zinc finger.

The protein belongs to the AccD/PCCB family. Acetyl-CoA carboxylase is a heterohexamer composed of biotin carboxyl carrier protein (AccB), biotin carboxylase (AccC) and two subunits each of ACCase subunit alpha (AccA) and ACCase subunit beta (AccD). The cofactor is Zn(2+).

Its subcellular location is the cytoplasm. It carries out the reaction N(6)-carboxybiotinyl-L-lysyl-[protein] + acetyl-CoA = N(6)-biotinyl-L-lysyl-[protein] + malonyl-CoA. The protein operates within lipid metabolism; malonyl-CoA biosynthesis; malonyl-CoA from acetyl-CoA: step 1/1. Component of the acetyl coenzyme A carboxylase (ACC) complex. Biotin carboxylase (BC) catalyzes the carboxylation of biotin on its carrier protein (BCCP) and then the CO(2) group is transferred by the transcarboxylase to acetyl-CoA to form malonyl-CoA. This chain is Acetyl-coenzyme A carboxylase carboxyl transferase subunit beta, found in Hydrogenovibrio crunogenus (strain DSM 25203 / XCL-2) (Thiomicrospira crunogena).